Consider the following 269-residue polypeptide: MAQRRAAAESARHQRLLEGKAQAEGGSARTSLLILVSIFTIAAFLMFLVYKNFPQLSEEEGKCIKIPRDMDDAKALGKVLSKYKDTFYVQVLVAYFATYVFLQTFAIPGSIFLSILSGFLYPFPLALFLVCLCSGLGASFCYMLSYLVGRPVVYKYLTEKAVKWSEQVERHREHLINYIIFLRITPFLPNWFINITSPVINVPLKVFFIGTFLGVAPPSFVAIKAGTTLYQLTTAGEAVSWNSLFVLMILAILSILPALFQKKLKQKFE.

6 helical membrane-spanning segments follow: residues Thr-30–Tyr-50, Phe-87–Ile-107, Leu-125–Leu-147, Leu-175–Ile-195, Pro-203–Ile-223, and Ser-240–Phe-260. The VTT domain; required for its function in autophagy stretch occupies residues Gly-118–Leu-229.

Belongs to the TMEM41 family.

It localises to the endoplasmic reticulum membrane. The protein localises to the endomembrane system. It catalyses the reaction a 1,2-diacyl-sn-glycero-3-phospho-L-serine(in) = a 1,2-diacyl-sn-glycero-3-phospho-L-serine(out). It carries out the reaction cholesterol(in) = cholesterol(out). The enzyme catalyses a 1,2-diacyl-sn-glycero-3-phosphocholine(in) = a 1,2-diacyl-sn-glycero-3-phosphocholine(out). The catalysed reaction is a 1,2-diacyl-sn-glycero-3-phosphoethanolamine(in) = a 1,2-diacyl-sn-glycero-3-phosphoethanolamine(out). Phospholipid scramblase involved in lipid homeostasis and membrane dynamics processes. Has phospholipid scramblase activity toward cholesterol and phosphatidylserine, as well as phosphatidylethanolamine and phosphatidylcholine. Required for autophagosome formation: participates in early stages of autophagosome biogenesis at the endoplasmic reticulum (ER) membrane by reequilibrating the leaflets of the ER as lipids are extracted by ATG2 (ATG2A or ATG2B) to mediate autophagosome assembly. In addition to autophagy, involved in other processes in which phospholipid scramblase activity is required. Required for normal motor neuron development. This Gallus gallus (Chicken) protein is Transmembrane protein 41B.